The chain runs to 702 residues: Methionine--tRNA ligase (702 aa).

Positions 14–24 (PYANGPVHLGH) match the 'HIGH' region motif. Zn(2+)-binding residues include Cys146, Cys149, Cys159, and Cys162. A 'KMSKS' region motif is present at residues 344–348 (KFSKS). Lys347 lines the ATP pocket. The region spanning 601–702 (DFLKVDLRVA…GDEINGQQIQ (102 aa)) is the tRNA-binding domain.

It belongs to the class-I aminoacyl-tRNA synthetase family. MetG type 1 subfamily. As to quaternary structure, homodimer. The cofactor is Zn(2+).

It is found in the cytoplasm. It catalyses the reaction tRNA(Met) + L-methionine + ATP = L-methionyl-tRNA(Met) + AMP + diphosphate. Its function is as follows. Is required not only for elongation of protein synthesis but also for the initiation of all mRNA translation through initiator tRNA(fMet) aminoacylation. The protein is Methionine--tRNA ligase of Chlorobium limicola (strain DSM 245 / NBRC 103803 / 6330).